Here is a 330-residue protein sequence, read N- to C-terminus: Probable L-asparaginase (330 aa).

The region spanning 6–330 is the Asparaginase/glutaminase domain; that stretch reads PTIALLATGG…EKIQEMFEEY (325 aa). The active-site O-isoaspartyl threonine intermediate is T16. Substrate contacts are provided by residues S62 and 95 to 96; that span reads TD.

This sequence belongs to the asparaginase 1 family.

It localises to the cytoplasm. The catalysed reaction is L-asparagine + H2O = L-aspartate + NH4(+). The chain is Probable L-asparaginase (ansA) from Helicobacter pylori (strain ATCC 700392 / 26695) (Campylobacter pylori).